The sequence spans 684 residues: 1,4-alpha-glucan-branching enzyme (684 aa).

(1,4-alpha-D-glucosyl)n-binding residues include W88 and K123. D340 acts as the Nucleophile in catalysis. E395 acts as the Proton donor in catalysis.

This sequence belongs to the glycosyl hydrolase 13 family. GlgB subfamily.

The protein localises to the cytoplasm. It catalyses the reaction Transfers a segment of a (1-&gt;4)-alpha-D-glucan chain to a primary hydroxy group in a similar glucan chain.. It functions in the pathway glycan biosynthesis; glycogen biosynthesis. Its function is as follows. Glycogen-branching enzyme participates in the glycogen biosynthetic process along with glycogenin and glycogen synthase. Generates alpha-1,6-glucosidic branches from alpha-1,4-linked glucose chains, to increase solubility of the glycogen polymer. The polypeptide is 1,4-alpha-glucan-branching enzyme (be1) (Emericella nidulans (strain FGSC A4 / ATCC 38163 / CBS 112.46 / NRRL 194 / M139) (Aspergillus nidulans)).